A 292-amino-acid polypeptide reads, in one-letter code: Probable ABC transporter permease protein YurN (292 aa).

A run of 6 helical transmembrane segments spans residues 7-27 (IIPY…YIPI), 70-90 (VLYA…LAAV), 106-126 (VFFL…DFIY), 160-180 (VIFV…IVSI), 215-235 (FVAV…PYIL), and 260-280 (MMGY…ALSL). The ABC transmembrane type-1 domain occupies 66-282 (LTNNVLYAVI…IITLALSLMQ (217 aa)).

This sequence belongs to the binding-protein-dependent transport system permease family. MalFG subfamily.

It localises to the cell membrane. Functionally, probably part of the binding-protein-dependent transport system YurMNO. Probably responsible for the translocation of the substrate across the membrane. This chain is Probable ABC transporter permease protein YurN (yurN), found in Bacillus subtilis (strain 168).